Consider the following 506-residue polypeptide: ATP synthase subunit alpha, chloroplastic (506 aa).

Position 170 to 177 (170 to 177 (GDRQTGKT)) interacts with ATP.

It belongs to the ATPase alpha/beta chains family. F-type ATPases have 2 components, CF(1) - the catalytic core - and CF(0) - the membrane proton channel. CF(1) has five subunits: alpha(3), beta(3), gamma(1), delta(1), epsilon(1). CF(0) has four main subunits: a, b, b' and c.

The protein localises to the plastid. It localises to the chloroplast thylakoid membrane. The enzyme catalyses ATP + H2O + 4 H(+)(in) = ADP + phosphate + 5 H(+)(out). Its function is as follows. Produces ATP from ADP in the presence of a proton gradient across the membrane. The alpha chain is a regulatory subunit. In Chlorella vulgaris (Green alga), this protein is ATP synthase subunit alpha, chloroplastic.